The primary structure comprises 48 residues: Small, acid-soluble spore protein O (48 aa).

Residues M1–A23 are disordered.

This sequence belongs to the SspO family.

The protein resides in the spore core. This Bacillus pumilus (strain SAFR-032) protein is Small, acid-soluble spore protein O.